The sequence spans 293 residues: Formamidopyrimidine-DNA glycosylase (293 aa).

The active-site Schiff-base intermediate with DNA is the Pro2. Glu3 (proton donor) is an active-site residue. Lys58 acts as the Proton donor; for beta-elimination activity in catalysis. His104, Arg123, and Lys166 together coordinate DNA. The segment at 257–293 adopts an FPG-type zinc-finger fold; that stretch reads AAYDREGERCRTDGCGGAVKRFVQNGRSTFWCSGCQK. Arg283 acts as the Proton donor; for delta-elimination activity in catalysis.

It belongs to the FPG family. Monomer. It depends on Zn(2+) as a cofactor.

It carries out the reaction Hydrolysis of DNA containing ring-opened 7-methylguanine residues, releasing 2,6-diamino-4-hydroxy-5-(N-methyl)formamidopyrimidine.. The catalysed reaction is 2'-deoxyribonucleotide-(2'-deoxyribose 5'-phosphate)-2'-deoxyribonucleotide-DNA = a 3'-end 2'-deoxyribonucleotide-(2,3-dehydro-2,3-deoxyribose 5'-phosphate)-DNA + a 5'-end 5'-phospho-2'-deoxyribonucleoside-DNA + H(+). Functionally, involved in base excision repair of DNA damaged by oxidation or by mutagenic agents. Acts as a DNA glycosylase that recognizes and removes damaged bases. Has a preference for oxidized purines, such as 7,8-dihydro-8-oxoguanine (8-oxoG). Has AP (apurinic/apyrimidinic) lyase activity and introduces nicks in the DNA strand. Cleaves the DNA backbone by beta-delta elimination to generate a single-strand break at the site of the removed base with both 3'- and 5'-phosphates. The polypeptide is Formamidopyrimidine-DNA glycosylase (Rhodopseudomonas palustris (strain BisB5)).